Here is a 324-residue protein sequence, read N- to C-terminus: Glyoxylate/hydroxypyruvate reductase B (324 aa).

Residues arginine 237 and glutamate 266 contribute to the active site. Histidine 285 functions as the Proton donor in the catalytic mechanism.

This sequence belongs to the D-isomer specific 2-hydroxyacid dehydrogenase family. GhrB subfamily. Homodimer.

The protein resides in the cytoplasm. The catalysed reaction is glycolate + NADP(+) = glyoxylate + NADPH + H(+). It catalyses the reaction (R)-glycerate + NAD(+) = 3-hydroxypyruvate + NADH + H(+). The enzyme catalyses (R)-glycerate + NADP(+) = 3-hydroxypyruvate + NADPH + H(+). Catalyzes the NADPH-dependent reduction of glyoxylate and hydroxypyruvate into glycolate and glycerate, respectively. This chain is Glyoxylate/hydroxypyruvate reductase B, found in Salmonella agona (strain SL483).